The chain runs to 320 residues: Ferrochelatase (320 aa).

Histidine 194 and glutamate 275 together coordinate Fe cation.

It belongs to the ferrochelatase family. Monomer.

The protein localises to the cytoplasm. It carries out the reaction heme b + 2 H(+) = protoporphyrin IX + Fe(2+). Its pathway is porphyrin-containing compound metabolism; protoheme biosynthesis; protoheme from protoporphyrin-IX: step 1/1. In terms of biological role, catalyzes the ferrous insertion into protoporphyrin IX. This Salmonella agona (strain SL483) protein is Ferrochelatase.